The following is a 323-amino-acid chain: Non-structural protein 9 (323 aa).

Positions 1-142 are disordered; sequence MFTSSAAKTG…GGSRPSQERG (142 aa). The segment covering 33 to 49 has biased composition (low complexity); that stretch reads IDGSISSGPISTGPDSD. Polar residues predominate over residues 99-115; the sequence is PNHTDIGTSLGQVTTKG.

Its subcellular location is the host cytoplasm. In terms of biological role, constituent of viral factories. The chain is Non-structural protein 9 from Rice gall dwarf virus (RGDV).